The sequence spans 70 residues: Turripeptide Pal9.2 (70 aa).

The N-terminal stretch at 1 to 20 (MKVYCLLVVLLVGLVSQTQG) is a signal peptide. The 50-residue stretch at 21–70 (QLDKKCNMACTLDYRPVCGSDGKTYPNRCALTSTACESQQSITVLHDGEC) folds into the Kazal-like domain. Intrachain disulfides connect Cys-26-Cys-56, Cys-30-Cys-49, and Cys-38-Cys-70.

Belongs to the conopeptide P-like superfamily. In terms of tissue distribution, expressed by the venom duct.

The protein localises to the secreted. Functionally, acts as a neurotoxin by inhibiting an ion channel. May also act as a serine protease inhibitor, since it possess the kazal serine protease inhibitor signature. This is Turripeptide Pal9.2 from Polystira albida (White giant-turris).